The following is a 455-amino-acid chain: tRNA modification GTPase MnmE (455 aa).

Residues arginine 24, glutamate 81, and lysine 120 each coordinate (6S)-5-formyl-5,6,7,8-tetrahydrofolate. Positions 216 to 378 (GMTVVIAGRP…LREHLKHCMG (163 aa)) constitute a TrmE-type G domain. Asparagine 226 contacts K(+). GTP contacts are provided by residues 226–231 (NAGKSS), 245–251 (TDIAGTT), 270–273 (DTAG), and 335–338 (NKAD). Serine 230 is a binding site for Mg(2+). Threonine 245, isoleucine 247, and threonine 250 together coordinate K(+). Threonine 251 is a Mg(2+) binding site. (6S)-5-formyl-5,6,7,8-tetrahydrofolate is bound at residue lysine 455.

This sequence belongs to the TRAFAC class TrmE-Era-EngA-EngB-Septin-like GTPase superfamily. TrmE GTPase family. Homodimer. Heterotetramer of two MnmE and two MnmG subunits. K(+) is required as a cofactor.

It is found in the cytoplasm. Its function is as follows. Exhibits a very high intrinsic GTPase hydrolysis rate. Involved in the addition of a carboxymethylaminomethyl (cmnm) group at the wobble position (U34) of certain tRNAs, forming tRNA-cmnm(5)s(2)U34. The protein is tRNA modification GTPase MnmE of Stutzerimonas stutzeri (strain A1501) (Pseudomonas stutzeri).